Here is a 178-residue protein sequence, read N- to C-terminus: MDDTLNQLNPSMSRRQLLNFFTGAIVAATASAAIYPATKFFMPPAESTDAEGGVLAKDKIGHPIPASQILVQASGTRALIAGLAGEPTYLTVREDGTLDPMGIVNNCTHLGCTFPWNPVDQQFQCPCHGSRYDAQGSVERGPANRPLKLVHVQVKDDYIWISSWQETDPRTGEKPWWV.

The chain crosses the membrane as a helical span at residues 17–36; it reads LLNFFTGAIVAATASAAIYP. The Rieske domain maps to 61–161; that stretch reads GHPIPASQIL…VQVKDDYIWI (101 aa). [2Fe-2S] cluster is bound by residues cysteine 107, histidine 109, cysteine 125, and histidine 128. Cysteines 112 and 127 form a disulfide.

Belongs to the Rieske iron-sulfur protein family. The 4 large subunits of the cytochrome b6-f complex are cytochrome b6, subunit IV (17 kDa polypeptide, PetD), cytochrome f and the Rieske protein, while the 4 small subunits are PetG, PetL, PetM and PetN. The complex functions as a dimer. [2Fe-2S] cluster is required as a cofactor.

It is found in the cellular thylakoid membrane. It carries out the reaction 2 oxidized [plastocyanin] + a plastoquinol + 2 H(+)(in) = 2 reduced [plastocyanin] + a plastoquinone + 4 H(+)(out). Component of the cytochrome b6-f complex, which mediates electron transfer between photosystem II (PSII) and photosystem I (PSI), cyclic electron flow around PSI, and state transitions. This is Cytochrome b6-f complex iron-sulfur subunit 2 from Trichormus variabilis (strain ATCC 29413 / PCC 7937) (Anabaena variabilis).